A 260-amino-acid chain; its full sequence is Probable carbohydrate esterase At4g34215 (260 aa).

Positions 1-22 (MEGGSITPGEDKPEIQSPIPPN) are disordered. Residues serine 31, aspartate 235, and histidine 238 contribute to the active site.

The protein belongs to the carbohydrate esterase 6 family.

The polypeptide is Probable carbohydrate esterase At4g34215 (Arabidopsis thaliana (Mouse-ear cress)).